The primary structure comprises 177 residues: Large ribosomal subunit protein uL6 (177 aa).

This sequence belongs to the universal ribosomal protein uL6 family. Part of the 50S ribosomal subunit.

Its function is as follows. This protein binds to the 23S rRNA, and is important in its secondary structure. It is located near the subunit interface in the base of the L7/L12 stalk, and near the tRNA binding site of the peptidyltransferase center. The chain is Large ribosomal subunit protein uL6 from Halorhodospira halophila (strain DSM 244 / SL1) (Ectothiorhodospira halophila (strain DSM 244 / SL1)).